The sequence spans 116 residues: MNAKKQSRIRRARRARAKMKELGVSRLCVNRTPRHIYAQVISAEGDRVVASASTLDKDLRSGSTGNRDAASAVGKLIAERAKAAGVSTVAFDRSGFKYHGRVKALADAAREGGLEF.

This sequence belongs to the universal ribosomal protein uL18 family. As to quaternary structure, part of the 50S ribosomal subunit; part of the 5S rRNA/L5/L18/L25 subcomplex. Contacts the 5S and 23S rRNAs.

This is one of the proteins that bind and probably mediate the attachment of the 5S RNA into the large ribosomal subunit, where it forms part of the central protuberance. This Saccharophagus degradans (strain 2-40 / ATCC 43961 / DSM 17024) protein is Large ribosomal subunit protein uL18.